The chain runs to 309 residues: Pyridoxal 5'-phosphate synthase subunit PDX1.1 (309 aa).

N-acetylmethionine is present on Met-1. Asp-41 serves as a coordination point for D-ribose 5-phosphate. Catalysis depends on Lys-98, which acts as the Schiff-base intermediate with D-ribose 5-phosphate. Gly-170 lines the D-ribose 5-phosphate pocket. Arg-182 provides a ligand contact to D-glyceraldehyde 3-phosphate. D-ribose 5-phosphate contacts are provided by residues Gly-231 and 252 to 253 (GS).

This sequence belongs to the PdxS/SNZ family. In terms of assembly, homodimer or heterodimer with PDX1.2 or PDX1.3. Interacts with PDX2. As to expression, expressed in flowers, shoots, leaves and weakly in roots.

Its subcellular location is the cytoplasm. It catalyses the reaction aldehydo-D-ribose 5-phosphate + D-glyceraldehyde 3-phosphate + L-glutamine = pyridoxal 5'-phosphate + L-glutamate + phosphate + 3 H2O + H(+). It participates in cofactor biosynthesis; pyridoxal 5'-phosphate biosynthesis. In terms of biological role, catalyzes the formation of pyridoxal 5'-phosphate from ribose 5-phosphate (RBP), glyceraldehyde 3-phosphate (G3P) and ammonia. The ammonia is provided by PDX2. Can also use ribulose 5-phosphate and dihydroxyacetone phosphate as substrates, resulting from enzyme-catalyzed isomerization of RBP and G3P, respectively. Also plays an indirect role in resistance to singlet oxygen-generating photosensitizers. This Arabidopsis thaliana (Mouse-ear cress) protein is Pyridoxal 5'-phosphate synthase subunit PDX1.1 (PDX11).